The primary structure comprises 480 residues: 11S globulin subunit beta (480 aa).

The N-terminal stretch at 1 to 21 (MARSSLFTFLCLAVFINGCLS) is a signal peptide. A Pyrrolidone carboxylic acid modification is found at Q22. Intrachain disulfides connect C48–C81 and C124–C303. Cupin type-1 domains are found at residues 51 to 251 (ENLR…GLVR) and 309 to 458 (QNIG…EEAQ). Residues K408 and R468 each contribute to the Mg(2+) site.

Belongs to the 11S seed storage protein (globulins) family. Hexamer; each subunit is composed of an acidic and a basic chain derived from a single precursor and linked by a disulfide bond.

This is a seed storage protein. This Cucurbita maxima (Pumpkin) protein is 11S globulin subunit beta.